We begin with the raw amino-acid sequence, 358 residues long: Glycerophosphodiester phosphodiesterase, periplasmic (358 aa).

The first 25 residues, 1 to 25 (MKLTLKNLSMAIMMSTIVMGSSAMA), serve as a signal peptide directing secretion. The GP-PDE domain occupies 31–355 (KIVIAHRGAS…DFPDKAVKFL (325 aa)). Histidine 36 acts as the Proton acceptor in catalysis. The Ca(2+) site is built by glutamate 63 and aspartate 65. Residue histidine 78 is the Proton donor of the active site. Glutamate 171 is a binding site for Ca(2+).

Belongs to the glycerophosphoryl diester phosphodiesterase family. As to quaternary structure, homodimer. Ca(2+) is required as a cofactor.

The protein localises to the periplasm. The catalysed reaction is a sn-glycero-3-phosphodiester + H2O = an alcohol + sn-glycerol 3-phosphate + H(+). Glycerophosphodiester phosphodiesterase hydrolyzes glycerophosphodiesters into glycerol-3-phosphate (G3P) and the corresponding alcohol. The sequence is that of Glycerophosphodiester phosphodiesterase, periplasmic (glpQ) from Escherichia coli (strain K12).